Consider the following 494-residue polypeptide: Glutamyl-tRNA(Gln) amidotransferase subunit A (494 aa).

Catalysis depends on charge relay system residues Lys79 and Ser159. Ser183 functions as the Acyl-ester intermediate in the catalytic mechanism.

Belongs to the amidase family. GatA subfamily. In terms of assembly, heterotrimer of A, B and C subunits.

The enzyme catalyses L-glutamyl-tRNA(Gln) + L-glutamine + ATP + H2O = L-glutaminyl-tRNA(Gln) + L-glutamate + ADP + phosphate + H(+). Its function is as follows. Allows the formation of correctly charged Gln-tRNA(Gln) through the transamidation of misacylated Glu-tRNA(Gln) in organisms which lack glutaminyl-tRNA synthetase. The reaction takes place in the presence of glutamine and ATP through an activated gamma-phospho-Glu-tRNA(Gln). The sequence is that of Glutamyl-tRNA(Gln) amidotransferase subunit A from Bartonella bacilliformis (strain ATCC 35685 / KC583 / Herrer 020/F12,63).